The chain runs to 741 residues: Phosphoribosylformylglycinamidine synthase subunit PurL (741 aa).

His53 is an active-site residue. Positions 56 and 95 each coordinate ATP. Glu97 serves as a coordination point for Mg(2+). Substrate is bound by residues 98 to 101 and Arg120; that span reads SHNH. Residue His99 is the Proton acceptor of the active site. Residue Asp121 coordinates Mg(2+). Position 244 (Gln244) interacts with substrate. A Mg(2+)-binding site is contributed by Asp274. 318–320 is a binding site for substrate; sequence ESQ. ATP-binding residues include Asp501 and Gly538. Asn539 contacts Mg(2+). Position 541 (Ser541) interacts with substrate.

The protein belongs to the FGAMS family. In terms of assembly, monomer. Part of the FGAM synthase complex composed of 1 PurL, 1 PurQ and 2 PurS subunits.

The protein resides in the cytoplasm. The catalysed reaction is N(2)-formyl-N(1)-(5-phospho-beta-D-ribosyl)glycinamide + L-glutamine + ATP + H2O = 2-formamido-N(1)-(5-O-phospho-beta-D-ribosyl)acetamidine + L-glutamate + ADP + phosphate + H(+). It functions in the pathway purine metabolism; IMP biosynthesis via de novo pathway; 5-amino-1-(5-phospho-D-ribosyl)imidazole from N(2)-formyl-N(1)-(5-phospho-D-ribosyl)glycinamide: step 1/2. Functionally, part of the phosphoribosylformylglycinamidine synthase complex involved in the purines biosynthetic pathway. Catalyzes the ATP-dependent conversion of formylglycinamide ribonucleotide (FGAR) and glutamine to yield formylglycinamidine ribonucleotide (FGAM) and glutamate. The FGAM synthase complex is composed of three subunits. PurQ produces an ammonia molecule by converting glutamine to glutamate. PurL transfers the ammonia molecule to FGAR to form FGAM in an ATP-dependent manner. PurS interacts with PurQ and PurL and is thought to assist in the transfer of the ammonia molecule from PurQ to PurL. The sequence is that of Phosphoribosylformylglycinamidine synthase subunit PurL from Ligilactobacillus salivarius (strain UCC118) (Lactobacillus salivarius).